Consider the following 247-residue polypeptide: uncharacterized protein (247 aa).

The protein belongs to the AIM2 family.

It localises to the cytoplasm. The protein resides in the nucleus. This is an uncharacterized protein from Schizosaccharomyces pombe (strain 972 / ATCC 24843) (Fission yeast).